The chain runs to 486 residues: Ribulose bisphosphate carboxylase large chain (486 aa).

Residues N126 and T176 each contribute to the substrate site. K178 functions as the Proton acceptor in the catalytic mechanism. Substrate is bound at residue K180. Mg(2+) is bound by residues K204, D206, and E207. K204 carries the N6-carboxylysine modification. H296 serves as the catalytic Proton acceptor. Positions 297, 329, and 381 each coordinate substrate.

Belongs to the RuBisCO large chain family. Type I subfamily. Heterohexadecamer of 8 large chains and 8 small chains. The cofactor is Mg(2+).

It carries out the reaction 2 (2R)-3-phosphoglycerate + 2 H(+) = D-ribulose 1,5-bisphosphate + CO2 + H2O. The catalysed reaction is D-ribulose 1,5-bisphosphate + O2 = 2-phosphoglycolate + (2R)-3-phosphoglycerate + 2 H(+). RuBisCO catalyzes two reactions: the carboxylation of D-ribulose 1,5-bisphosphate, the primary event in carbon dioxide fixation, as well as the oxidative fragmentation of the pentose substrate. Both reactions occur simultaneously and in competition at the same active site. This chain is Ribulose bisphosphate carboxylase large chain, found in Cupriavidus taiwanensis (strain DSM 17343 / BCRC 17206 / CCUG 44338 / CIP 107171 / LMG 19424 / R1) (Ralstonia taiwanensis (strain LMG 19424)).